The sequence spans 128 residues: UPF0102 protein GSU0650 (128 aa).

The protein belongs to the UPF0102 family.

The polypeptide is UPF0102 protein GSU0650 (Geobacter sulfurreducens (strain ATCC 51573 / DSM 12127 / PCA)).